The primary structure comprises 439 residues: MNIFEHNIKNVDKGNVVAIVGTQWGDEGKGKIIDMLSKYSNITCRFNGGGNAGHTICVGNKKHALHLLPCGVLYENNVNVLGNCMVIHLKTLMKEINNLGNNILDRIYISEKAHILFDIHQEIDAMQETRKSKDGNAIGTTKKGIGPCYSTKASRIGIRMGSLRNFENFKKLYTKLIDNLMELYNIKDYNKEEELNEFYTYHQILKDKIINIMLYINKSIDAKKYILIEGANAAMLDIDLGTYPFVTSSSTTIGGVFSGLGIHHKKLNLVVGVVKSYLTRVGSGPFLTEQCNEIGDYLTKKGFEYGTTTNRPRRCGWLDLPMLYYVKYINCIDIINLTKLDVLSGLKEIYICIDYKNKTTGELLEKGSYPLEEEQLREYEPVYEKFEGWDEDITNCLEFDQLPEKAKKYVLAIESYIKTPIVWIGVGPTRDHTITRKFD.

GTP-binding positions include 25–31, 53–55, and Lys62; these read GDEGKGK and GHT. Asp26 acts as the Proton acceptor in catalysis. 2 residues coordinate Mg(2+): Asp26 and Gly53. Residues 26 to 29 and 51 to 54 each bind IMP; these read DEGK and NAGH. His54 (proton donor) is an active-site residue. The IMP site is built by Thr141, Arg155, Asn232, and Thr247. Thr307 lines the GTP pocket. 307–313 serves as a coordination point for substrate; that stretch reads TTTNRPR. Position 311 (Arg311) interacts with IMP. GTP is bound by residues Arg313, 339 to 341, and 425 to 427; these read KLD and GVG.

The protein belongs to the adenylosuccinate synthetase family. As to quaternary structure, homodimer. Mg(2+) is required as a cofactor.

The protein localises to the cytoplasm. It catalyses the reaction IMP + L-aspartate + GTP = N(6)-(1,2-dicarboxyethyl)-AMP + GDP + phosphate + 2 H(+). Its pathway is purine metabolism; AMP biosynthesis via de novo pathway; AMP from IMP: step 1/2. In terms of biological role, plays an important role in the salvage pathway for purine nucleotide biosynthesis. Catalyzes the first commited step in the biosynthesis of AMP from IMP. The protein is Adenylosuccinate synthetase of Plasmodium chabaudi chabaudi.